An 865-amino-acid chain; its full sequence is Alanine--tRNA ligase (865 aa).

4 residues coordinate Zn(2+): histidine 556, histidine 560, cysteine 660, and histidine 664.

This sequence belongs to the class-II aminoacyl-tRNA synthetase family. The cofactor is Zn(2+).

The protein resides in the cytoplasm. It carries out the reaction tRNA(Ala) + L-alanine + ATP = L-alanyl-tRNA(Ala) + AMP + diphosphate. Its function is as follows. Catalyzes the attachment of alanine to tRNA(Ala) in a two-step reaction: alanine is first activated by ATP to form Ala-AMP and then transferred to the acceptor end of tRNA(Ala). Also edits incorrectly charged Ser-tRNA(Ala) and Gly-tRNA(Ala) via its editing domain. This chain is Alanine--tRNA ligase, found in Vesicomyosocius okutanii subsp. Calyptogena okutanii (strain HA).